A 1053-amino-acid chain; its full sequence is CRISPR-associated endonuclease Cas9 (1053 aa).

A ruvC-I region spans residues Met1–Val41. Asp10 acts as the For RuvC-like nuclease domain in catalysis. Asp10 is a Mg(2+) binding site. A recognition lobe region spans residues Val41–Lys426. Residues Glu435–Glu481 are ruvC-II. Mg(2+) contacts are provided by Glu477 and Glu481. In terms of domain architecture, HNH Cas9-type spans Arg480–Leu646. His557 (proton acceptor for HNH nuclease domain) is an active-site residue. Positions Arg650–Val775 are ruvC-III. His701 lines the Mg(2+) pocket. Tyr789 serves as a coordination point for RNA. 2 PAM substrate-binding regions span residues Tyr882 to Ala889 and Asn985 to Glu993. The tract at residues Lys910–Gly1053 is PAM-interacting domain (PI).

It belongs to the CRISPR-associated Cas9 family. Subtype II-A subfamily. Monomer. Binds crRNA and tracrRNA. Mg(2+) serves as cofactor.

In terms of biological role, CRISPR (clustered regularly interspaced short palindromic repeat) is an adaptive immune system that provides protection against mobile genetic elements (viruses, transposable elements and conjugative plasmids). CRISPR clusters contain spacers, sequences complementary to antecedent mobile elements, and target invading nucleic acids. CRISPR clusters are transcribed and processed into CRISPR RNA (crRNA). In type II CRISPR systems correct processing of pre-crRNA requires a trans-encoded small RNA (tracrRNA), endogenous ribonuclease 3 (rnc) and this protein. The tracrRNA serves as a guide for ribonuclease 3-aided processing of pre-crRNA. Subsequently Cas9/crRNA/tracrRNA endonucleolytically cleaves linear or circular dsDNA target complementary to the spacer; Cas9 is inactive in the absence of the 2 guide RNAs (gRNA). Cas9 recognizes the protospacer adjacent motif (PAM) in the CRISPR repeat sequences to help distinguish self versus nonself, as targets within the bacterial CRISPR locus do not have PAMs. PAM recognition is also required for catalytic activity. In Staphylococcus aureus, this protein is CRISPR-associated endonuclease Cas9.